Consider the following 327-residue polypeptide: Glycerol-3-phosphate dehydrogenase [NAD(P)+] (327 aa).

NADPH-binding residues include W11, H30, and K103. K103, G131, and S133 together coordinate sn-glycerol 3-phosphate. NADPH is bound at residue A135. The sn-glycerol 3-phosphate site is built by K186, D243, S253, R254, and N255. K186 functions as the Proton acceptor in the catalytic mechanism. Position 254 (R254) interacts with NADPH. Residues V281 and E283 each coordinate NADPH.

Belongs to the NAD-dependent glycerol-3-phosphate dehydrogenase family.

The protein resides in the cytoplasm. The enzyme catalyses sn-glycerol 3-phosphate + NAD(+) = dihydroxyacetone phosphate + NADH + H(+). It catalyses the reaction sn-glycerol 3-phosphate + NADP(+) = dihydroxyacetone phosphate + NADPH + H(+). Its pathway is membrane lipid metabolism; glycerophospholipid metabolism. In terms of biological role, catalyzes the reduction of the glycolytic intermediate dihydroxyacetone phosphate (DHAP) to sn-glycerol 3-phosphate (G3P), the key precursor for phospholipid synthesis. In Wolbachia pipientis wMel, this protein is Glycerol-3-phosphate dehydrogenase [NAD(P)+].